The chain runs to 574 residues: Urease subunit alpha (574 aa).

The Urease domain occupies 131-574 (GAIDSHIHFI…LPMAQRYLLI (444 aa)). Histidine 136, histidine 138, and lysine 219 together coordinate Ni(2+). Residue lysine 219 is modified to N6-carboxylysine. Histidine 221 serves as a coordination point for substrate. Positions 248 and 274 each coordinate Ni(2+). Catalysis depends on histidine 322, which acts as the Proton donor. Aspartate 362 contributes to the Ni(2+) binding site.

The protein belongs to the metallo-dependent hydrolases superfamily. Urease alpha subunit family. In terms of assembly, heterotrimer of UreA (gamma), UreB (beta) and UreC (alpha) subunits. Three heterotrimers associate to form the active enzyme. Ni cation serves as cofactor. Carboxylation allows a single lysine to coordinate two nickel ions.

It localises to the cytoplasm. It carries out the reaction urea + 2 H2O + H(+) = hydrogencarbonate + 2 NH4(+). Its pathway is nitrogen metabolism; urea degradation; CO(2) and NH(3) from urea (urease route): step 1/1. In Prochlorococcus marinus (strain MIT 9303), this protein is Urease subunit alpha.